A 429-amino-acid chain; its full sequence is Enolase (429 aa).

Q167 is a binding site for (2R)-2-phosphoglycerate. E209 acts as the Proton donor in catalysis. 3 residues coordinate Mg(2+): D246, E289, and D316. Residues K341, R370, S371, and K392 each contribute to the (2R)-2-phosphoglycerate site. K341 functions as the Proton acceptor in the catalytic mechanism.

The protein belongs to the enolase family. In terms of assembly, component of the RNA degradosome, a multiprotein complex involved in RNA processing and mRNA degradation. Mg(2+) is required as a cofactor.

It localises to the cytoplasm. The protein localises to the secreted. It is found in the cell surface. It catalyses the reaction (2R)-2-phosphoglycerate = phosphoenolpyruvate + H2O. The protein operates within carbohydrate degradation; glycolysis; pyruvate from D-glyceraldehyde 3-phosphate: step 4/5. Its function is as follows. Catalyzes the reversible conversion of 2-phosphoglycerate (2-PG) into phosphoenolpyruvate (PEP). It is essential for the degradation of carbohydrates via glycolysis. The sequence is that of Enolase from Pseudomonas putida (strain ATCC 47054 / DSM 6125 / CFBP 8728 / NCIMB 11950 / KT2440).